Here is a 92-residue protein sequence, read N- to C-terminus: Defensin Lucifensin (92 aa).

An N-terminal signal peptide occupies residues 1-23 (MKFFMVFAVTFCLALSFVSQSLA). The propeptide occupies 24–52 (LPADDEAHFVDGLEALKTIEPELHGRYKR). Disulfide bonds link Cys55–Cys82, Cys68–Cys88, and Cys72–Cys90.

Belongs to the invertebrate defensin family. Type 1 subfamily. In terms of processing, the disulfide bonds are essential for antimicrobial activity. In terms of tissue distribution, larval fat body, hemolymph and salivary glands (at protein level). Expressed in the salivary glands of all larval stages.

The protein resides in the secreted. The protein localises to the host cell membrane. Functionally, shows strong antibacterial activity against numerous Gram-positive bacteria. It selectively inhibits peptidoglycan biosynthesis through complex formation with the cell wall precursor lipid II (1:1 molar ratio) thus inhibiting cell wall synthesis. Shows antibacterial activity against the Gram-positive bacteria M.luteus, E.fecalis (MIC=32 mg/L), S.aureus (MIC=16 mg/L), S.carnosus (MIC=2 mg/L), S.pneumoniae (MIC=2 mg/L) and S.pyogenes (MIC=2 mg/L) and against a number of methicillin-resistant S.aureus and glycopeptide-intermediate S.aureus isolates. Does not show antibacterial activity against Gram-negative bacteria or antifungal activity against C.utilis. Shows slight antifungal activity against C.albicans. The polypeptide is Defensin Lucifensin (Lucilia sericata (Green bottle fly)).